Consider the following 218-residue polypeptide: Adenylate kinase (218 aa).

10–15 (GAGKGT) is an ATP binding site. An NMP region spans residues 30-59 (STGDMLRAAVKAGTPLGIAAKKIMDEGGLV). AMP-binding positions include Thr-31, Arg-36, 57 to 59 (GLV), 85 to 88 (GFPR), and Gln-92. The interval 122–159 (GRRVHPASGRTYHVKFNPPKVAGKDDLTGEELIQRDDD) is LID. Residues Arg-123 and 132–133 (TY) each bind ATP. Residues Arg-156 and Arg-167 each contribute to the AMP site. ATP is bound at residue Gly-203.

The protein belongs to the adenylate kinase family. As to quaternary structure, monomer.

It localises to the cytoplasm. The enzyme catalyses AMP + ATP = 2 ADP. Its pathway is purine metabolism; AMP biosynthesis via salvage pathway; AMP from ADP: step 1/1. In terms of biological role, catalyzes the reversible transfer of the terminal phosphate group between ATP and AMP. Plays an important role in cellular energy homeostasis and in adenine nucleotide metabolism. The chain is Adenylate kinase from Janthinobacterium sp. (strain Marseille) (Minibacterium massiliensis).